A 398-amino-acid polypeptide reads, in one-letter code: Putative molybdopterin biosynthesis protein MJ0666 (398 aa).

The protein belongs to the MoeA family.

It functions in the pathway cofactor biosynthesis; molybdopterin biosynthesis. The protein is Putative molybdopterin biosynthesis protein MJ0666 of Methanocaldococcus jannaschii (strain ATCC 43067 / DSM 2661 / JAL-1 / JCM 10045 / NBRC 100440) (Methanococcus jannaschii).